We begin with the raw amino-acid sequence, 298 residues long: uncharacterized protein (298 aa).

The next 10 membrane-spanning stretches (helical) occupy residues 5 to 23 (ILVSLLASFLFGYMYYFST), 33 to 52 (IFGYRMIFTFPFVLLSVTLF), 72 to 91 (ALSYLLCGLLMGFQMWLFLW), 101 to 120 (VSFGYLLLPIVMVAAGRVFF), 127 to 145 (FKFIAVIIATLGVISNIVL), 149 to 166 (LSWEAIVICLGYTAYFSI), 175 to 194 (LASFCLEMLSLMPVSIYFAL), 207 to 229 (FIWGXLVLLGLISGTALIAYVIA), 238 to 260 (LGLLGYVETIMMLCVSFLIGEQI), and 265 to 284 (YPLFICLVIAMILVMVDGVY). Residues 13–144 (FLFGYMYYFS…ATLGVISNIV (132 aa)) enclose the EamA domain.

It belongs to the EamA transporter family.

Its subcellular location is the cell membrane. This is an uncharacterized protein from Haemophilus influenzae (strain ATCC 51907 / DSM 11121 / KW20 / Rd).